Reading from the N-terminus, the 186-residue chain is Peptidyl-tRNA hydrolase (186 aa).

Tyr14 is a tRNA binding site. Residue His19 is the Proton acceptor of the active site. TRNA contacts are provided by Tyr61, Asn63, and Asn107.

Belongs to the PTH family. Monomer.

It is found in the cytoplasm. The enzyme catalyses an N-acyl-L-alpha-aminoacyl-tRNA + H2O = an N-acyl-L-amino acid + a tRNA + H(+). Functionally, hydrolyzes ribosome-free peptidyl-tRNAs (with 1 or more amino acids incorporated), which drop off the ribosome during protein synthesis, or as a result of ribosome stalling. Its function is as follows. Catalyzes the release of premature peptidyl moieties from peptidyl-tRNA molecules trapped in stalled 50S ribosomal subunits, and thus maintains levels of free tRNAs and 50S ribosomes. The sequence is that of Peptidyl-tRNA hydrolase from Helicobacter pylori (strain G27).